Here is a 406-residue protein sequence, read N- to C-terminus: Zinc metalloprotease Rip1 (406 aa).

Residues 1–21 (MMFGIGIVLFALAILVSVALH) form a helical membrane-spanning segment. Position 21 (histidine 21) interacts with Zn(2+). Glutamate 22 is a catalytic residue. Zn(2+) is bound at residue histidine 25. Residues 108–128 (PAMNFVIGLVLIYGIAIVWGL) form a helical membrane-spanning segment. One can recognise a PDZ domain in the interval 125–209 (VWGLPNLHQP…RIEFKRDGRV (85 aa)). Residue aspartate 206 participates in Zn(2+) binding. 2 helical membrane passes run 327–349 (NFVLGAINLVPLLPFDGGHIAVA) and 375–395 (LMPATYVVLAVVAGYMLLTVT).

This sequence belongs to the peptidase M50B family. Zn(2+) is required as a cofactor.

The protein resides in the cell membrane. With respect to regulation, proteolysis is inhibited by Wag31; when Wag31 is non-functional oxidative stress increases proteolysis. Its function is as follows. A probable intramembrane site-2 protease (S2P) that cleaves type-2 transmembrane proteins within their membrane-spanning domains. Degrades PbpB (PBP3, FtsI) under conditions of oxidatives stress; degradation is inhibited by Wag31-PbpB interaction. Also cleaves anti-sigma factors RskA, RslA and RslM. Site-1 proteases have not yet been identified in this organism. Functionally, regulated intramembrane proteolysis (RIP) occurs when an extracytoplasmic signal (possibly oxidative stress) triggers a concerted proteolytic cascade to transmit information and elicit cellular responses. The membrane-spanning regulatory substrate protein (includes anti-sigma factors RskA, RslA, RsmA, and PbpB) is first cut extracytoplasmically (site-1 protease, S1P), then within the membrane itself (site-2 protease, S2P, this entry), while cytoplasmic proteases finish degrading the regulatory protein, liberating the effector protein (ECF sigma factors SigK, SigL and SigM). The polypeptide is Zinc metalloprotease Rip1 (rip1) (Mycolicibacterium smegmatis (strain ATCC 700084 / mc(2)155) (Mycobacterium smegmatis)).